We begin with the raw amino-acid sequence, 55 residues long: uncharacterized protein (55 aa).

Residues 27-44 (SFWFILISASSFLIYSLF) form a helical membrane-spanning segment.

Its subcellular location is the membrane. This is an uncharacterized protein from Dictyostelium discoideum (Social amoeba).